The chain runs to 269 residues: Type II restriction enzyme SfiI (269 aa).

It catalyses the reaction Endonucleolytic cleavage of DNA to give specific double-stranded fragments with terminal 5'-phosphates.. Functionally, an F and P subtype restriction enzyme that recognizes the double-stranded sequence 5'-GGCCN(5)GGCC-3' and cleaves before N-9. The sequence is that of Type II restriction enzyme SfiI (sfiIR) from Streptomyces fimbriatus.